A 280-amino-acid polypeptide reads, in one-letter code: MSQSTPLTVFVLSDSVGQTALQLAQAALAQYPNVKPDIIRFPFVHSVDKLTDVLSKAVPEETIVVHTLATTGLSEIAQNYCDAKKIASFDMMSPLTKLITAKTSLAPSGEAGALHHLNDRYFDRISAMEFAVMYDDGKDPHGFLEADIVLLGVSRTSKTPLSLFLANRNIKVANLPIVPQAHIPDEIWHVDPKKIIGLMNTPEVLNNIRRERMIAYGLNPDTTYSDMDEIKAELDFAQDLYDKIGCQVINVANRSIEETAAIILEQTGLDFASSSTDHVN.

152–159 is an ADP binding site; it reads GVSRTSKT.

It belongs to the pyruvate, phosphate/water dikinase regulatory protein family. PDRP subfamily.

It catalyses the reaction N(tele)-phospho-L-histidyl/L-threonyl-[pyruvate, phosphate dikinase] + ADP = N(tele)-phospho-L-histidyl/O-phospho-L-threonyl-[pyruvate, phosphate dikinase] + AMP + H(+). The catalysed reaction is N(tele)-phospho-L-histidyl/O-phospho-L-threonyl-[pyruvate, phosphate dikinase] + phosphate + H(+) = N(tele)-phospho-L-histidyl/L-threonyl-[pyruvate, phosphate dikinase] + diphosphate. Its function is as follows. Bifunctional serine/threonine kinase and phosphorylase involved in the regulation of the pyruvate, phosphate dikinase (PPDK) by catalyzing its phosphorylation/dephosphorylation. The polypeptide is Putative pyruvate, phosphate dikinase regulatory protein 1 (Latilactobacillus sakei subsp. sakei (strain 23K) (Lactobacillus sakei subsp. sakei)).